The sequence spans 217 residues: Homologous-pairing protein 2 homolog (217 aa).

The interval 89–117 is interaction with NR3C1, homodimerization and transcriptional activation almost abolished when missing; sequence LDASIMALTAKVQGLQQSCRHMEAELKEL. The stretch at 93–153 forms a coiled coil; that stretch reads IMALTAKVQG…LKNIKAATNH (61 aa). The interval 118–182 is DNA-binding; it reads TSALTTPEMQ…WRKRKRMTTE (65 aa). An interaction with NR3C1 decreased when missing region spans residues 118–182; it reads TSALTTPEMQ…WRKRKRMTTE (65 aa).

It belongs to the HOP2 family. In terms of assembly, forms a stable heterodimer with MND1. Interacts with PSMC3/TBP1. Interacts with the DNA-binding domain of the nuclear receptors NR3C1/GR, ESR2/ER-beta, THRB and RXRA. Phosphorylated by PKA, PKC and MAPK.

The protein localises to the nucleus. Its function is as follows. Plays an important role in meiotic recombination. Stimulates DMC1-mediated strand exchange required for pairing homologous chromosomes during meiosis. The complex PSMC3IP/MND1 binds DNA, stimulates the recombinase activity of DMC1 as well as DMC1 D-loop formation from double-strand DNA. This complex stabilizes presynaptic RAD51 and DMC1 filaments formed on single strand DNA to capture double-strand DNA. This complex stimulates both synaptic and presynaptic critical steps in RAD51 and DMC1-promoted homologous pairing. May inhibit HIV-1 viral protein TAT activity and modulate the activity of proteasomes through association with PSMC3. Plays a role as a coactivator in nuclear receptor-mediated transcription. This chain is Homologous-pairing protein 2 homolog (Psmc3ip), found in Rattus norvegicus (Rat).